The primary structure comprises 356 residues: Alanine racemase, catabolic (356 aa).

Residue lysine 35 is the Proton acceptor; specific for D-alanine of the active site. At lysine 35 the chain carries N6-(pyridoxal phosphate)lysine. Arginine 130 contacts substrate. The Proton acceptor; specific for L-alanine role is filled by tyrosine 253. A substrate-binding site is contributed by methionine 301.

The protein belongs to the alanine racemase family. It depends on pyridoxal 5'-phosphate as a cofactor.

The catalysed reaction is L-alanine = D-alanine. In terms of biological role, isomerizes L-alanine to D-alanine which is then oxidized to pyruvate by DadA. This Salmonella typhi protein is Alanine racemase, catabolic (dadX).